The chain runs to 1249 residues: Cilia- and flagella-associated protein 57 (1249 aa).

WD repeat units lie at residues 105-148, 195-233, 335-374, 386-425, 427-469, 471-506, 509-548, and 635-674; these read FQVQ…AIIK, GESS…WETS, SDKQ…ISKG, LHSA…LELY, EYQE…KEYS, RGCK…NINI, GHTG…RETE, and AHAG…GRGI. Coiled coils occupy residues 690–1056 and 1094–1165; these read KTDM…KTDL and SDLQ…SALK.

Belongs to the CFAP57 family. May form homodimers. Associates with components of the nexin-dynein regulatory complex (N-DRC) and the CFAP184:CFAP263 complex. Predominanly expressed in testis, lung and skin. Weak expression in brain and kidney.

Its subcellular location is the cytoplasm. It is found in the cytoskeleton. The protein resides in the cilium axoneme. Associates with components of the nexin-dynein regulatory complex (N-DRC), a key regulator of ciliary/flagellar motility, and might act as an inner dynein arm (IDA) hub or linkage. The protein is Cilia- and flagella-associated protein 57 of Mus musculus (Mouse).